Consider the following 351-residue polypeptide: Prohormone-2 (351 aa).

The signal sequence occupies residues 1 to 21 (MMCDWVWLLLTLCSLLMIVQS). 2 propeptides span residues 22 to 177 (LPTN…QTQV) and 192 to 319 (ELDI…MISR). Over residues 51-69 (GNQQNHQPENNPSSSYSST) the composition is skewed to polar residues. 2 disordered regions span residues 51–71 (GNQQNHQPENNPSSSYSSTAE) and 136–176 (NEDR…VQTQ). Basic and acidic residues predominate over residues 136–145 (NEDRRKRSEK). Positions 158–176 (PSTTSFQSPTSTQQSVQTQ) are enriched in low complexity.

It is found in the secreted. The sequence is that of Prohormone-2 from Apis mellifera (Honeybee).